The chain runs to 248 residues: Granulin (248 aa).

The protein belongs to the polyhedrin family.

Component of the virus occlusion bodies, which are large proteinaceous structures, that protect the virus from the outside environment for extended periods until they are ingested by insect larvae. The sequence is that of Granulin from Zygaenidae (burnets).